Reading from the N-terminus, the 283-residue chain is Bifunctional protein FolD (283 aa).

NADP(+) is bound by residues 166–168 and Ile232; that span reads GAS.

The protein belongs to the tetrahydrofolate dehydrogenase/cyclohydrolase family. Homodimer.

The catalysed reaction is (6R)-5,10-methylene-5,6,7,8-tetrahydrofolate + NADP(+) = (6R)-5,10-methenyltetrahydrofolate + NADPH. It carries out the reaction (6R)-5,10-methenyltetrahydrofolate + H2O = (6R)-10-formyltetrahydrofolate + H(+). It functions in the pathway one-carbon metabolism; tetrahydrofolate interconversion. Functionally, catalyzes the oxidation of 5,10-methylenetetrahydrofolate to 5,10-methenyltetrahydrofolate and then the hydrolysis of 5,10-methenyltetrahydrofolate to 10-formyltetrahydrofolate. In Mannheimia succiniciproducens (strain KCTC 0769BP / MBEL55E), this protein is Bifunctional protein FolD.